The following is a 417-amino-acid chain: Gamma-glutamyl phosphate reductase (417 aa).

Belongs to the gamma-glutamyl phosphate reductase family.

It is found in the cytoplasm. It catalyses the reaction L-glutamate 5-semialdehyde + phosphate + NADP(+) = L-glutamyl 5-phosphate + NADPH + H(+). It functions in the pathway amino-acid biosynthesis; L-proline biosynthesis; L-glutamate 5-semialdehyde from L-glutamate: step 2/2. Catalyzes the NADPH-dependent reduction of L-glutamate 5-phosphate into L-glutamate 5-semialdehyde and phosphate. The product spontaneously undergoes cyclization to form 1-pyrroline-5-carboxylate. This is Gamma-glutamyl phosphate reductase from Clostridium novyi (strain NT).